A 262-amino-acid polypeptide reads, in one-letter code: Shikimate dehydrogenase (NADP(+)) (262 aa).

Shikimate contacts are provided by residues 15–17 (SRS) and threonine 62. Residue lysine 66 is the Proton acceptor of the active site. Position 78 (glutamate 78) interacts with NADP(+). Shikimate is bound by residues asparagine 87 and aspartate 102. NADP(+) is bound by residues 126-130 (GAGGA), 150-155 (NRTLAR), and methionine 214. Tyrosine 216 contributes to the shikimate binding site. Glycine 236 serves as a coordination point for NADP(+).

This sequence belongs to the shikimate dehydrogenase family. In terms of assembly, homodimer.

It catalyses the reaction shikimate + NADP(+) = 3-dehydroshikimate + NADPH + H(+). Its pathway is metabolic intermediate biosynthesis; chorismate biosynthesis; chorismate from D-erythrose 4-phosphate and phosphoenolpyruvate: step 4/7. In terms of biological role, involved in the biosynthesis of the chorismate, which leads to the biosynthesis of aromatic amino acids. Catalyzes the reversible NADPH linked reduction of 3-dehydroshikimate (DHSA) to yield shikimate (SA). This chain is Shikimate dehydrogenase (NADP(+)), found in Acinetobacter baumannii (strain ACICU).